The primary structure comprises 310 residues: Ribosomal protein uL3 glutamine methyltransferase (310 aa).

Belongs to the protein N5-glutamine methyltransferase family. PrmB subfamily.

The catalysed reaction is L-glutaminyl-[ribosomal protein uL3] + S-adenosyl-L-methionine = N(5)-methyl-L-glutaminyl-[ribosomal protein uL3] + S-adenosyl-L-homocysteine + H(+). In terms of biological role, methylates large ribosomal subunit protein uL3 on a specific glutamine residue. The protein is Ribosomal protein uL3 glutamine methyltransferase of Aliivibrio fischeri (strain ATCC 700601 / ES114) (Vibrio fischeri).